Here is a 436-residue protein sequence, read N- to C-terminus: NAD(P)-dependent benzaldehyde dehydrogenase (436 aa).

Residues 117–119, 143–147, 175–178, 193–194, 215–216, C249, and 337–339 contribute to the NADP(+) site; these read GPF, KPSET, RDEN, GS, EL, and ELF. Catalysis depends on residues E215 and C249.

It belongs to the aldehyde dehydrogenase family.

It carries out the reaction benzaldehyde + NAD(+) + H2O = benzoate + NADH + 2 H(+). The catalysed reaction is benzaldehyde + NADP(+) + H2O = benzoate + NADPH + 2 H(+). The protein operates within aromatic compound metabolism; (R)-mandelate degradation; benzoate from (R)-mandelate: step 4/4. Functionally, NAD or NADP-dependent benzaldehyde dehydrogenase that catalyzes the conversion of benzaldehyde into benzoate in the (R)-mandelate degradation pathway. This Pseudomonas putida (Arthrobacter siderocapsulatus) protein is NAD(P)-dependent benzaldehyde dehydrogenase (mdlD).